The following is a 204-amino-acid chain: Imidazoleglycerol-phosphate dehydratase (204 aa).

The segment at 183–204 is disordered; that stretch reads DPRMDGITPSTKGTLSESGDSQ. A compositionally biased stretch (polar residues) spans 190–204; sequence TPSTKGTLSESGDSQ.

This sequence belongs to the imidazoleglycerol-phosphate dehydratase family.

Its subcellular location is the cytoplasm. The enzyme catalyses D-erythro-1-(imidazol-4-yl)glycerol 3-phosphate = 3-(imidazol-4-yl)-2-oxopropyl phosphate + H2O. Its pathway is amino-acid biosynthesis; L-histidine biosynthesis; L-histidine from 5-phospho-alpha-D-ribose 1-diphosphate: step 6/9. The sequence is that of Imidazoleglycerol-phosphate dehydratase from Alcanivorax borkumensis (strain ATCC 700651 / DSM 11573 / NCIMB 13689 / SK2).